The following is a 615-amino-acid chain: RNA polymerase sigma factor RpoD (615 aa).

The disordered stretch occupies residues 166 to 216; that stretch reads GYIDPDDGITPPAAEVPPPVDTKTAKADDDSEDEEAEATEDEEEAESGPDP. Residues 194-212 are compositionally biased toward acidic residues; it reads DDSEDEEAEATEDEEEAES. Residues 381–451 are sigma-70 factor domain-2; it reads MVEANLRLVI…TRSIADQART (71 aa). The short motif at 405–408 is the Interaction with polymerase core subunit RpoC element; that stretch reads DLIQ. Positions 460 to 536 are sigma-70 factor domain-3; it reads ETINKLNRIS…DSTMQSPIDV (77 aa). A sigma-70 factor domain-4 region spans residues 549–602; that stretch reads VLSGLTAREAKVLRMRFGIDMNTDHTLEEVGKQFDVTRERIRQIEAKALRKLRH. The segment at residues 575–594 is a DNA-binding region (H-T-H motif); it reads LEEVGKQFDVTRERIRQIEA.

It belongs to the sigma-70 factor family. RpoD/SigA subfamily. Interacts transiently with the RNA polymerase catalytic core.

It is found in the cytoplasm. In terms of biological role, sigma factors are initiation factors that promote the attachment of RNA polymerase to specific initiation sites and are then released. This sigma factor is the primary sigma factor during exponential growth. This Pseudomonas protegens (strain DSM 19095 / LMG 27888 / CFBP 6595 / CHA0) protein is RNA polymerase sigma factor RpoD.